Consider the following 249-residue polypeptide: Mitochondrial intermembrane space import and assembly protein 40 (249 aa).

The transit peptide at 1 to 22 (MYRLATRRVLAQTTQTFSKRTF) directs the protein to the mitochondrion. Over 23 to 36 (SNQGFRAAKASKTN) the chain is Mitochondrial matrix. Residues 37 to 55 (MYLGAGIALIPVIMSINYL) traverse the membrane as a helical; Signal-anchor for type II membrane protein segment. Over 56-249 (NGNHIANEVD…KAKAEDSNTK (194 aa)) the chain is Mitochondrial intermembrane. Residues 95 to 127 (KADVKTKVPAEEANPETRTETDKPSEESQKDEE) are compositionally biased toward basic and acidic residues. A disordered region spans residues 95-136 (KADVKTKVPAEEANPETRTETDKPSEESQKDEENSYEGAAYN). Intrachain disulfides connect Cys-146/Cys-148, Cys-157/Cys-190, and Cys-167/Cys-180. One can recognise a CHCH domain in the interval 154-198 (HGPCGEEFKEAFACFIYSESEPKGIECIKKFESMRNCFREHPEHY). 2 short sequence motifs (cx9C motif) span residues 157–167 (CGEEFKEAFAC) and 180–190 (CIKKFESMRNC). The disordered stretch occupies residues 202–249 (LYDDEEQEPLVDVNEKKGDASEQSAETIADDATKVVKEKAKAEDSNTK). Residues 232–249 (DATKVVKEKAKAEDSNTK) are compositionally biased toward basic and acidic residues.

Monomer. Requires Cu(2+) as cofactor. Zn(2+) serves as cofactor.

It localises to the mitochondrion inner membrane. In terms of biological role, required for the import and folding of small cysteine-containing proteins (small Tim) in the mitochondrial intermembrane space (IMS). Forms a redox cycle with ERV1 that involves a disulfide relay system. Precursor proteins to be imported into the IMS are translocated in their reduced form into the mitochondria. The oxidized form of MIA40 forms a transient intermolecular disulfide bridge with the reduced precursor protein, resulting in oxidation of the precursor protein that now contains an intramolecular disulfide bond and is able to undergo folding in the IMS. The chain is Mitochondrial intermembrane space import and assembly protein 40 (MIA40) from Debaryomyces hansenii (strain ATCC 36239 / CBS 767 / BCRC 21394 / JCM 1990 / NBRC 0083 / IGC 2968) (Yeast).